Consider the following 706-residue polypeptide: Ribosomal RNA large subunit methyltransferase K/L (706 aa).

Residues 43–154 (LMYQSLLWSR…RDMASVALDL (112 aa)) enclose the THUMP domain.

It belongs to the methyltransferase superfamily. RlmKL family.

Its subcellular location is the cytoplasm. It catalyses the reaction guanosine(2445) in 23S rRNA + S-adenosyl-L-methionine = N(2)-methylguanosine(2445) in 23S rRNA + S-adenosyl-L-homocysteine + H(+). The catalysed reaction is guanosine(2069) in 23S rRNA + S-adenosyl-L-methionine = N(2)-methylguanosine(2069) in 23S rRNA + S-adenosyl-L-homocysteine + H(+). Functionally, specifically methylates the guanine in position 2445 (m2G2445) and the guanine in position 2069 (m7G2069) of 23S rRNA. This is Ribosomal RNA large subunit methyltransferase K/L from Yersinia pestis bv. Antiqua (strain Antiqua).